A 344-amino-acid polypeptide reads, in one-letter code: MNHAITMGIFWHLIGAASAACFYAPFKKVKHWSWETMWSVGGTVSWLILPWTISAILLPDFWAYFTSFNASTLLPVFLFGAMWGIGNINYGLTMRYLGMSMGIGIAIGITLIVGTLMTPILNGNFDVLINTHGGRMTLLGVLVAVIGVGIVTRAGQLKERKMGITAEDFNLRKGLVLAVMCGIFSAGMSFAMNAAKPMHEAAAALGVDPLYVALPSYVVIMGGGALVNLGFCFIRLAKVKNLSVKADFSLAKPLIVTNVLLSALGGLMWYLQFFFYAWGHASIPSQYDYMSWMLHMSFYVLCGGMVGLVLKEWNNAGRRPVGVLSLGCVVIIIAANIVGLGMAS.

Transmembrane regions (helical) follow at residues 4-24 (AITM…CFYA), 38-58 (WSVG…AILL), 72-92 (TLLP…NYGL), 101-121 (MGIG…TPIL), 137-157 (TLLG…AGQL), 175-195 (LVLA…MNAA), 214-234 (LPSY…FCFI), 259-279 (VLLS…YAWG), 290-310 (MSWM…GLVL), and 321-341 (VGVL…VGLG).

The protein belongs to the L-rhamnose transporter (TC 2.A.7.6) family.

It localises to the cell inner membrane. It carries out the reaction L-rhamnopyranose(in) + H(+)(in) = L-rhamnopyranose(out) + H(+)(out). Its function is as follows. Uptake of L-rhamnose across the cytoplasmic membrane with the concomitant transport of protons into the cell (symport system). In Enterobacter sp. (strain 638), this protein is L-rhamnose-proton symporter.